We begin with the raw amino-acid sequence, 242 residues long: Uridylate kinase (242 aa).

15 to 18 (KLSG) is an ATP binding site. An involved in allosteric activation by GTP region spans residues 23–28 (GDEGFG). Gly57 lines the UMP pocket. ATP contacts are provided by Gly58 and Arg62. Residues Asp77 and 138–145 (TGNPFCTT) contribute to the UMP site. 3 residues coordinate ATP: Thr165, Tyr171, and Asp174.

This sequence belongs to the UMP kinase family. In terms of assembly, homohexamer.

It localises to the cytoplasm. The enzyme catalyses UMP + ATP = UDP + ADP. The protein operates within pyrimidine metabolism; CTP biosynthesis via de novo pathway; UDP from UMP (UMPK route): step 1/1. Allosterically activated by GTP. Inhibited by UTP. Catalyzes the reversible phosphorylation of UMP to UDP. The sequence is that of Uridylate kinase from Shewanella sp. (strain MR-4).